A 428-amino-acid polypeptide reads, in one-letter code: Histone deacetylase 3 (428 aa).

A histone deacetylase region spans residues Lys3–Asp316. 3 residues coordinate 1D-myo-inositol 1,4,5,6-tetrakisphosphate: His17, Gly21, and Lys25. His135 is an active-site residue. Zn(2+)-binding residues include Asp170, His172, and Asp259. Arg265 contacts 1D-myo-inositol 1,4,5,6-tetrakisphosphate. The interval Leu385 to Ile428 is disordered. Composition is skewed to basic and acidic residues over residues Ser386–Ser405 and Asp415–Ile428.

Belongs to the histone deacetylase family. HD type 1 subfamily.

The protein resides in the nucleus. Its subcellular location is the chromosome. The protein localises to the cytoplasm. It localises to the cytosol. The enzyme catalyses N(6)-acetyl-L-lysyl-[histone] + H2O = L-lysyl-[histone] + acetate. It carries out the reaction N(6)-acetyl-L-lysyl-[protein] + H2O = L-lysyl-[protein] + acetate. The catalysed reaction is N(6)-(2E)-butenoyl-L-lysyl-[protein] + H2O = (2E)-2-butenoate + L-lysyl-[protein]. It catalyses the reaction N(6)-(2-hydroxyisobutanoyl)-L-lysyl-[protein] + H2O = 2-hydroxy-2-methylpropanoate + L-lysyl-[protein]. The enzyme catalyses N(6)-[(S)-lactoyl]-L-lysyl-[protein] + H2O = (S)-lactate + L-lysyl-[protein]. With respect to regulation, inositol tetraphosphate (1D-myo-inositol 1,4,5,6-tetrakisphosphate) promotes the histone deacetylase activity by acting as an intermolecular glue between HDAC3 and N-Cor repressor complex components. Its function is as follows. Histone deacetylase that catalyzes the deacetylation of lysine residues on the N-terminal part of the core histones (H2A, H2B, H3 and H4), and some other non-histone substrates. Histone deacetylation gives a tag for epigenetic repression and plays an important role in transcriptional regulation, cell cycle progression and developmental events. Histone deacetylases act via the formation of large multiprotein complexes, such as N-Cor repressor complex, which activate the histone deacetylase activity. Participates in the BCL6 transcriptional repressor activity by deacetylating the H3 'Lys-27' (H3K27) on enhancer elements, antagonizing EP300 acetyltransferase activity and repressing proximal gene expression. Also functions as a deacetylase for non-histone targets. In addition to protein deacetylase activity, also acts as a protein-lysine deacylase by recognizing other acyl groups: catalyzes removal of (2E)-butenoyl (crotonyl), lactoyl (lactyl) and 2-hydroxyisobutanoyl (2-hydroxyisobutyryl) acyl groups from lysine residues, leading to protein decrotonylation, delactylation and de-2-hydroxyisobutyrylation, respectively. This is Histone deacetylase 3 (HDAC3) from Gallus gallus (Chicken).